The chain runs to 295 residues: Probable aspartoacylase (295 aa).

Residues histidine 16 and glutamate 19 each contribute to the Zn(2+) site. Residues arginine 58 and asparagine 65 to arginine 66 contribute to the substrate site. Histidine 107 lines the Zn(2+) pocket. Substrate contacts are provided by glutamate 166 and tyrosine 277.

Belongs to the AspA/AstE family. Aspartoacylase subfamily. The cofactor is Zn(2+).

It carries out the reaction an N-acyl-L-aspartate + H2O = a carboxylate + L-aspartate. In Acaryochloris marina (strain MBIC 11017), this protein is Probable aspartoacylase.